A 418-amino-acid polypeptide reads, in one-letter code: Creatine kinase U-type, mitochondrial (418 aa).

The N-terminal 39 residues, 1–39 (MAGPFSRLLSARPGLRLLALAGAGSLTAGILLRPESVGA), are a transit peptide targeting the mitochondrion. A cardiolipin-binding region spans residues 40–64 (AAAERRRLYPPSAEYPDLRKHNNCM). The 87-residue stretch at 46–132 (RLYPPSAEYP…FDPVIQERHN (87 aa)) folds into the Phosphagen kinase N-terminal domain. S152 carries the post-translational modification Phosphoserine. The Phosphagen kinase C-terminal domain occupies 159–401 (YVLSSRVRTG…NYLIDCERRL (243 aa)). 162–166 (SSRVR) lines the ATP pocket. The residue at position 197 (S197) is a Phosphoserine. At T214 the chain carries Phosphothreonine. H225 serves as a coordination point for ATP. Residue S233 is modified to Phosphoserine. ATP is bound by residues R270, R326, and 354–359 (RGTGGV). T356 is subject to Phosphothreonine. S366 bears the Phosphoserine mark. D369 is an ATP binding site.

The protein belongs to the ATP:guanido phosphotransferase family. In terms of assembly, exists as an octamer composed of four MTCK homodimers.

The protein resides in the mitochondrion inner membrane. The catalysed reaction is creatine + ATP = N-phosphocreatine + ADP + H(+). Its function is as follows. Reversibly catalyzes the transfer of phosphate between ATP and various phosphogens (e.g. creatine phosphate). Creatine kinase isoenzymes play a central role in energy transduction in tissues with large, fluctuating energy demands, such as skeletal muscle, heart, brain and spermatozoa. This is Creatine kinase U-type, mitochondrial (Ckmt1) from Mus musculus (Mouse).